A 173-amino-acid polypeptide reads, in one-letter code: Flavodoxin (173 aa).

In terms of domain architecture, Flavodoxin-like spans 2-168; sequence IGIFFSTSTG…RVAGWVEAVV (167 aa).

This sequence belongs to the flavodoxin family. Requires FMN as cofactor.

Its function is as follows. Low-potential electron donor to a number of redox enzymes. The polypeptide is Flavodoxin (Chondrus crispus (Carrageen Irish moss)).